The sequence spans 124 residues: Ribonuclease pancreatic (124 aa).

The span at 1 to 13 (KESAAAKFERQHM) shows a compositional bias: basic and acidic residues. Residues 1-25 (KESAAAKFERQHMDPSPSSASSSNY) form a disordered region. Substrate-binding residues include Lys-7 and Arg-10. His-12 functions as the Proton acceptor in the catalytic mechanism. 4 cysteine pairs are disulfide-bonded: Cys-26-Cys-84, Cys-40-Cys-95, Cys-58-Cys-110, and Cys-65-Cys-72. Asn-34 is a glycosylation site (N-linked (GlcNAc...) asparagine; partial). Substrate contacts are provided by residues 41–45 (KPVNT), Lys-66, and Arg-85. His-119 (proton donor) is an active-site residue.

This sequence belongs to the pancreatic ribonuclease family. As to quaternary structure, monomer. Interacts with and forms tight 1:1 complexes with RNH1. Dimerization of two such complexes may occur. Interaction with RNH1 inhibits this protein. In terms of tissue distribution, pancreas.

The protein localises to the secreted. The catalysed reaction is an [RNA] containing cytidine + H2O = an [RNA]-3'-cytidine-3'-phosphate + a 5'-hydroxy-ribonucleotide-3'-[RNA].. It carries out the reaction an [RNA] containing uridine + H2O = an [RNA]-3'-uridine-3'-phosphate + a 5'-hydroxy-ribonucleotide-3'-[RNA].. Functionally, endonuclease that catalyzes the cleavage of RNA on the 3' side of pyrimidine nucleotides. Acts on single-stranded and double-stranded RNA. In Capreolus capreolus (European roe deer), this protein is Ribonuclease pancreatic (RNASE1).